Reading from the N-terminus, the 298-residue chain is Porphobilinogen deaminase (298 aa).

C239 is subject to S-(dipyrrolylmethanemethyl)cysteine.

Belongs to the HMBS family. As to quaternary structure, monomer. Dipyrromethane is required as a cofactor.

It catalyses the reaction 4 porphobilinogen + H2O = hydroxymethylbilane + 4 NH4(+). It participates in porphyrin-containing compound metabolism; protoporphyrin-IX biosynthesis; coproporphyrinogen-III from 5-aminolevulinate: step 2/4. Its function is as follows. Tetrapolymerization of the monopyrrole PBG into the hydroxymethylbilane pre-uroporphyrinogen in several discrete steps. The sequence is that of Porphobilinogen deaminase from Ehrlichia chaffeensis (strain ATCC CRL-10679 / Arkansas).